A 577-amino-acid polypeptide reads, in one-letter code: ABC transporter G family member 4 (577 aa).

The ABC transporter domain maps to 6 to 248 (LSTSSISYAK…LLSKGFTVPS (243 aa)). 48 to 55 (GPSGAGKS) provides a ligand contact to ATP. Residues 299 to 509 (TEISLLSSRF…ALDALLINEY (211 aa)) enclose the ABC transmembrane type-2 domain. A run of 7 helical transmembrane segments spans residues 318–338 (LLLT…TIYL), 353–373 (LFAF…PIFI), 400–420 (VFLP…YFLV), 429–449 (LAYF…FVLF), 458–478 (IAGT…SGYF), 487–507 (YWLF…LLIN), and 548–568 (FNVY…FLVL).

Belongs to the ABC transporter superfamily. ABCG family. Eye pigment precursor importer (TC 3.A.1.204) subfamily.

Its subcellular location is the membrane. This chain is ABC transporter G family member 4 (ABCG4), found in Arabidopsis thaliana (Mouse-ear cress).